Reading from the N-terminus, the 876-residue chain is Alanine--tRNA ligase (876 aa).

Zn(2+) is bound by residues H566, H570, C667, and H671.

This sequence belongs to the class-II aminoacyl-tRNA synthetase family. Zn(2+) serves as cofactor.

The protein localises to the cytoplasm. The enzyme catalyses tRNA(Ala) + L-alanine + ATP = L-alanyl-tRNA(Ala) + AMP + diphosphate. Its function is as follows. Catalyzes the attachment of alanine to tRNA(Ala) in a two-step reaction: alanine is first activated by ATP to form Ala-AMP and then transferred to the acceptor end of tRNA(Ala). Also edits incorrectly charged Ser-tRNA(Ala) and Gly-tRNA(Ala) via its editing domain. In Albidiferax ferrireducens (strain ATCC BAA-621 / DSM 15236 / T118) (Rhodoferax ferrireducens), this protein is Alanine--tRNA ligase.